A 187-amino-acid chain; its full sequence is Accessory gene regulator protein B (187 aa).

A run of 5 helical transmembrane segments spans residues Ile49 to Ile69, Phe82 to Phe102, Thr107 to Ala127, Tyr143 to Tyr163, and Thr164 to Ser184.

The protein belongs to the AgrB family.

The protein localises to the cell membrane. Essential for the production of a quorum sensing system signal molecule, the autoinducing peptide (AIP). This quorum sensing system is responsible for the regulation of the expression of virulence factor genes. Involved in the proteolytic processing of AgrD, the precursor of AIP. This Staphylococcus aureus (strain MW2) protein is Accessory gene regulator protein B.